The sequence spans 1031 residues: MADPAECNIKVVCRVRPMNATEQNTSHICTKFISEEQVQIGGKLNMFDRIFKPNTTQEEVYNKAARQIVKDVLDGYNGTIFAYGQTSSGKTFTMEGVMGNPQYMGIIPRIVQDIFNHIYQMDESLEFHIKVSYFEIYMDRIRDLLDVSKTNLSVHEDKNRVPFVKGATERFASSPEEVMDVIEEGKSNRHIAVTNMNEHSSRSHSIFLIQVKQENMETKKKLSGKLYLVDLAGSEKVSKTGAEGTVLDEAKNINKSLSALGNVISALADGKKSHIPYRDSKMTRILQESLGGNARTTIVICCSPSSFNESESKSTLMFGQRAKTIKNTVTVNMELTAEEWRNRYEKEKEKNGRLKAQLLILENELQRWRAGESVPVKEQGNKNDEILKEMMKPKQMTVHVSEEEKNKWEEEKVKLYEQLDEKDSEIDNQSRLTEKLKQQMLEQEELLSSMQRDYELLQSQMGRLEAENAAAKEEAKEVLQALEEMAVNYDEKSKEVEDKNRMNETLSEEVNEKMTALHTTSTELQKLQELEQHQRRRITEMMASLLKDLGEIGTALGGNAADMKPNVENIEKVDEEFTMARLFVSKMKTEVKTMSQRCKILEASNAENETKIRTSEDELDSCRMTIQQHEAKMKSLSENIRETEGKKRHLEDSLDMLNEEIVKLRAAEEIRLTDQEDKKREEEDKMQSATEMQASMSEQMESHRDAHQKQLANLRTEINEKEHQMEELKDVNQRMTLQHEKLQLDYEKLKIEEAEKAAKLRELSQQFDRREQAKQDLKGLEETVAKELQTLHNLRKLFVSDLQNRVKKALEGGDRDDDSGGSQAQKQKISFLENNLEQLTKVHKQLVRDNADLRCELPKLERRLRATSERVKALEMSLKETKEGAMRDRKRYQQEVDRIREAVRQRNFAKRGSSAQIAKAIRAGHPPPSPGGSTGIRGGGYSGIRGGGSPVIRPPSHGSPEPISHNNSFEKSLNPNDAENMEKKANKRLPKLPPGGNKLTESDIAAMKARSKARNNTPGKAPLTTSGEQGS.

Residues 8 to 325 form the Kinesin motor domain; it reads NIKVVCRVRP…LMFGQRAKTI (318 aa). 84-91 is an ATP binding site; sequence GQTSSGKT. Positions 393 to 857 form a coiled coil; sequence PKQMTVHVSE…RDNADLRCEL (465 aa). Over residues 673 to 686 the composition is skewed to basic and acidic residues; it reads TDQEDKKREEEDKM. Disordered stretches follow at residues 673 to 692 and 906 to 1031; these read TDQEDKKREEEDKMQSATEM and RNFA…EQGS. Residues 858-1031 are globular; sequence PKLERRLRAT…PLTTSGEQGS (174 aa). Positions 932 to 949 are enriched in gly residues; the sequence is GSTGIRGGGYSGIRGGGS. Composition is skewed to polar residues over residues 964-977 and 1014-1031; these read SHNNSFEKSLNPND and RNNTPGKAPLTTSGEQGS.

The protein belongs to the TRAFAC class myosin-kinesin ATPase superfamily. Kinesin family. Kinesin subfamily. Oligomer composed of two heavy chains and two light chains.

Its subcellular location is the cytoplasm. It is found in the cytoskeleton. In terms of biological role, kinesin is a microtubule-associated force-producing protein that may play a role in organelle transport. The sequence is that of Kinesin heavy chain from Strongylocentrotus purpuratus (Purple sea urchin).